The primary structure comprises 148 residues: uncharacterized protein (148 aa).

A helical membrane pass occupies residues tyrosine 22–valine 40. The tract at residues histidine 43–histidine 141 is histidine-rich.

It is found in the host membrane. This is an uncharacterized protein from African swine fever virus (strain Badajoz 1971 Vero-adapted) (Ba71V).